A 145-amino-acid polypeptide reads, in one-letter code: D-aminoacyl-tRNA deacylase (145 aa).

Positions 137–138 match the Gly-cisPro motif, important for rejection of L-amino acids motif; it reads GP.

Belongs to the DTD family. Homodimer.

The protein localises to the cytoplasm. The catalysed reaction is glycyl-tRNA(Ala) + H2O = tRNA(Ala) + glycine + H(+). It carries out the reaction a D-aminoacyl-tRNA + H2O = a tRNA + a D-alpha-amino acid + H(+). In terms of biological role, an aminoacyl-tRNA editing enzyme that deacylates mischarged D-aminoacyl-tRNAs. Also deacylates mischarged glycyl-tRNA(Ala), protecting cells against glycine mischarging by AlaRS. Acts via tRNA-based rather than protein-based catalysis; rejects L-amino acids rather than detecting D-amino acids in the active site. By recycling D-aminoacyl-tRNA to D-amino acids and free tRNA molecules, this enzyme counteracts the toxicity associated with the formation of D-aminoacyl-tRNA entities in vivo and helps enforce protein L-homochirality. The sequence is that of D-aminoacyl-tRNA deacylase from Enterobacter sp. (strain 638).